A 208-amino-acid chain; its full sequence is Cysteine-rich protein 2 (208 aa).

The 53-residue stretch at Cys-5–Cys-57 folds into the LIM zinc-binding 1 domain. Position 23 is an N6-acetyllysine (Lys-23). Ser-104 carries the phosphoserine modification. Positions Cys-126 to Cys-178 constitute an LIM zinc-binding 2 domain. Residues Lys-138 and Lys-144 each carry the N6-acetyllysine modification.

In terms of assembly, interacts with TGFB1I1. As to expression, expressed more abundantly in liver and kidney of females than that of males. Equally expressed in brain, lung and heart.

This Rattus norvegicus (Rat) protein is Cysteine-rich protein 2 (Crip2).